Consider the following 127-residue polypeptide: Large ribosomal subunit protein bL17 (127 aa).

Belongs to the bacterial ribosomal protein bL17 family. In terms of assembly, part of the 50S ribosomal subunit. Contacts protein L32.

This is Large ribosomal subunit protein bL17 from Legionella pneumophila (strain Paris).